A 138-amino-acid polypeptide reads, in one-letter code: Large ribosomal subunit protein bL19 (138 aa).

This sequence belongs to the bacterial ribosomal protein bL19 family.

Functionally, this protein is located at the 30S-50S ribosomal subunit interface and may play a role in the structure and function of the aminoacyl-tRNA binding site. This is Large ribosomal subunit protein bL19 from Rickettsia africae (strain ESF-5).